The primary structure comprises 237 residues: Leucyl/phenylalanyl-tRNA--protein transferase (237 aa).

It belongs to the L/F-transferase family.

It localises to the cytoplasm. It catalyses the reaction N-terminal L-lysyl-[protein] + L-leucyl-tRNA(Leu) = N-terminal L-leucyl-L-lysyl-[protein] + tRNA(Leu) + H(+). The enzyme catalyses N-terminal L-arginyl-[protein] + L-leucyl-tRNA(Leu) = N-terminal L-leucyl-L-arginyl-[protein] + tRNA(Leu) + H(+). It carries out the reaction L-phenylalanyl-tRNA(Phe) + an N-terminal L-alpha-aminoacyl-[protein] = an N-terminal L-phenylalanyl-L-alpha-aminoacyl-[protein] + tRNA(Phe). Its function is as follows. Functions in the N-end rule pathway of protein degradation where it conjugates Leu, Phe and, less efficiently, Met from aminoacyl-tRNAs to the N-termini of proteins containing an N-terminal arginine or lysine. The protein is Leucyl/phenylalanyl-tRNA--protein transferase of Shewanella baltica (strain OS185).